A 224-amino-acid chain; its full sequence is Peroxiredoxin-6 (224 aa).

A Thioredoxin domain is found at L5–L169. The interval D31–P40 is required and sufficient for targeting to lysosomes and lamellar bodies. At T44 the chain carries Phosphothreonine. C47 functions as the Cysteine sulfenic acid (-SOH) intermediate; for peroxidase activity in the catalytic mechanism. At K63 the chain carries N6-acetyllysine. Y89 is modified (phosphotyrosine). The active-site For phospholipase activity is the D140. Phosphothreonine; by MAPK is present on T177. K209 is modified (N6-acetyllysine; alternate). K209 bears the N6-succinyllysine; alternate mark.

The protein belongs to the peroxiredoxin family. Prx6 subfamily. In terms of assembly, homodimer. Interacts with GSTP1; mediates PRDX6 glutathionylation and regeneration. Interacts with APEX1. Interacts with STH. May interact with FAM168B. May interact with HTR2A. Does not need Ca(2+) as cofactor. is required as a cofactor. Irreversibly inactivated by overoxidation of Cys-47 to sulfinic acid (Cys-SO(2)H) and sulfonic acid (Cys-SO(3)H) forms upon oxidative stress. In terms of processing, phosphorylation at Thr-177 by MAP kinases increases the phospholipase activity of the enzyme. The phosphorylated form exhibits a greater lysophosphatidylcholine acyltransferase activity compared to the non-phosphorylated form.

The protein localises to the cytoplasm. Its subcellular location is the lysosome. It carries out the reaction a hydroperoxide + 2 glutathione = an alcohol + glutathione disulfide + H2O. The enzyme catalyses a 1,2-diacyl-sn-glycero-3-phosphocholine + H2O = a 1-acyl-sn-glycero-3-phosphocholine + a fatty acid + H(+). The catalysed reaction is a 1-acyl-sn-glycero-3-phosphocholine + an acyl-CoA = a 1,2-diacyl-sn-glycero-3-phosphocholine + CoA. It catalyses the reaction 1-hexadecanoyl-sn-glycero-3-phosphocholine + hexadecanoyl-CoA = 1,2-dihexadecanoyl-sn-glycero-3-phosphocholine + CoA. It carries out the reaction 1,2-dihexadecanoyl-sn-glycero-3-phosphocholine + H2O = 1-hexadecanoyl-sn-glycero-3-phosphocholine + hexadecanoate + H(+). Functionally, thiol-specific peroxidase that catalyzes the reduction of hydrogen peroxide and organic hydroperoxides to water and alcohols, respectively. Can reduce H(2)O(2) and short chain organic, fatty acid, and phospholipid hydroperoxides. Also has phospholipase activity, and can therefore either reduce the oxidized sn-2 fatty acyl group of phospholipids (peroxidase activity) or hydrolyze the sn-2 ester bond of phospholipids (phospholipase activity). These activities are dependent on binding to phospholipids at acidic pH and to oxidized phospholipds at cytosolic pH. Plays a role in cell protection against oxidative stress by detoxifying peroxides and in phospholipid homeostasis. Exhibits acyl-CoA-dependent lysophospholipid acyltransferase which mediates the conversion of lysophosphatidylcholine (1-acyl-sn-glycero-3-phosphocholine or LPC) into phosphatidylcholine (1,2-diacyl-sn-glycero-3-phosphocholine or PC). Shows a clear preference for LPC as the lysophospholipid and for palmitoyl CoA as the fatty acyl substrate. In Bos taurus (Bovine), this protein is Peroxiredoxin-6 (PRDX6).